The primary structure comprises 287 residues: Acetylglutamate kinase (287 aa).

Substrate-binding positions include 64–65 (GG), arginine 86, and asparagine 185.

The protein belongs to the acetylglutamate kinase family. ArgB subfamily.

It localises to the cytoplasm. It catalyses the reaction N-acetyl-L-glutamate + ATP = N-acetyl-L-glutamyl 5-phosphate + ADP. Its pathway is amino-acid biosynthesis; L-arginine biosynthesis; N(2)-acetyl-L-ornithine from L-glutamate: step 2/4. Its function is as follows. Catalyzes the ATP-dependent phosphorylation of N-acetyl-L-glutamate. The chain is Acetylglutamate kinase from Hydrogenobaculum sp. (strain Y04AAS1).